Consider the following 210-residue polypeptide: Histidine biosynthesis bifunctional protein HisIE (210 aa).

Residues methionine 1–serine 106 form a phosphoribosyl-AMP cyclohydrolase region. The interval valine 107–tryptophan 210 is phosphoribosyl-ATP pyrophosphohydrolase.

This sequence in the N-terminal section; belongs to the PRA-CH family. In the C-terminal section; belongs to the PRA-PH family.

It is found in the cytoplasm. The catalysed reaction is 1-(5-phospho-beta-D-ribosyl)-ATP + H2O = 1-(5-phospho-beta-D-ribosyl)-5'-AMP + diphosphate + H(+). It carries out the reaction 1-(5-phospho-beta-D-ribosyl)-5'-AMP + H2O = 1-(5-phospho-beta-D-ribosyl)-5-[(5-phospho-beta-D-ribosylamino)methylideneamino]imidazole-4-carboxamide. Its pathway is amino-acid biosynthesis; L-histidine biosynthesis; L-histidine from 5-phospho-alpha-D-ribose 1-diphosphate: step 2/9. It functions in the pathway amino-acid biosynthesis; L-histidine biosynthesis; L-histidine from 5-phospho-alpha-D-ribose 1-diphosphate: step 3/9. This chain is Histidine biosynthesis bifunctional protein HisIE (hisI), found in Staphylococcus aureus (strain Mu50 / ATCC 700699).